The sequence spans 295 residues: Aspartate carbamoyltransferase catalytic subunit (295 aa).

The carbamoyl phosphate site is built by R49 and T50. K77 contacts L-aspartate. Carbamoyl phosphate contacts are provided by R99, H127, and Q130. 2 residues coordinate L-aspartate: R161 and R212. 2 residues coordinate carbamoyl phosphate: G251 and P252.

This sequence belongs to the aspartate/ornithine carbamoyltransferase superfamily. ATCase family. Heterododecamer (2C3:3R2) of six catalytic PyrB chains organized as two trimers (C3), and six regulatory PyrI chains organized as three dimers (R2).

It catalyses the reaction carbamoyl phosphate + L-aspartate = N-carbamoyl-L-aspartate + phosphate + H(+). It functions in the pathway pyrimidine metabolism; UMP biosynthesis via de novo pathway; (S)-dihydroorotate from bicarbonate: step 2/3. Catalyzes the condensation of carbamoyl phosphate and aspartate to form carbamoyl aspartate and inorganic phosphate, the committed step in the de novo pyrimidine nucleotide biosynthesis pathway. The chain is Aspartate carbamoyltransferase catalytic subunit from Campylobacter jejuni subsp. doylei (strain ATCC BAA-1458 / RM4099 / 269.97).